We begin with the raw amino-acid sequence, 329 residues long: GTP 3',8-cyclase (329 aa).

The region spanning Ala-8 to Ala-234 is the Radical SAM core domain. A GTP-binding site is contributed by Arg-17. Residues Cys-24 and Cys-28 each coordinate [4Fe-4S] cluster. Tyr-30 lines the S-adenosyl-L-methionine pocket. Cys-31 contacts [4Fe-4S] cluster. Arg-68 is a binding site for GTP. Gly-72 contributes to the S-adenosyl-L-methionine binding site. Residue Thr-99 coordinates GTP. Ser-123 lines the S-adenosyl-L-methionine pocket. Lys-160 serves as a coordination point for GTP. Met-194 contacts S-adenosyl-L-methionine. 2 residues coordinate [4Fe-4S] cluster: Cys-257 and Cys-260. Arg-262 to Arg-264 is a GTP binding site. [4Fe-4S] cluster is bound at residue Cys-274.

The protein belongs to the radical SAM superfamily. MoaA family. As to quaternary structure, monomer and homodimer. [4Fe-4S] cluster serves as cofactor.

The catalysed reaction is GTP + AH2 + S-adenosyl-L-methionine = (8S)-3',8-cyclo-7,8-dihydroguanosine 5'-triphosphate + 5'-deoxyadenosine + L-methionine + A + H(+). It participates in cofactor biosynthesis; molybdopterin biosynthesis. Functionally, catalyzes the cyclization of GTP to (8S)-3',8-cyclo-7,8-dihydroguanosine 5'-triphosphate. This is GTP 3',8-cyclase from Salmonella paratyphi B (strain ATCC BAA-1250 / SPB7).